Reading from the N-terminus, the 485-residue chain is Protein disulfide-isomerase 1 (485 aa).

Positions Met-1–Ala-20 are cleaved as a signal peptide. Thioredoxin domains lie at Asp-21–Gly-130 and Tyr-342–Gly-470. 2 disulfide bridges follow: Cys-52–Cys-55 and Cys-393–Cys-396. Catalysis depends on nucleophile residues Cys-393 and Cys-396. Positions His-482–Leu-485 match the Prevents secretion from ER motif.

The protein belongs to the protein disulfide isomerase family.

It localises to the endoplasmic reticulum lumen. The enzyme catalyses Catalyzes the rearrangement of -S-S- bonds in proteins.. The sequence is that of Protein disulfide-isomerase 1 (pdi-1) from Caenorhabditis elegans.